The chain runs to 2115 residues: Non-reducing polyketide synthase ascC (2115 aa).

The disordered stretch occupies residues 1–21 (MTLIQTKHSASAAVFSPQSTA). Residues 14-260 (VFSPQSTAPK…HNSRNTELAQ (247 aa)) are N-terminal acylcarrier protein transacylase domain (SAT). Residues 381–805 (PDSIAIVGSA…GSNSALICSE (425 aa)) form the Ketosynthase family 3 (KS3) domain. Residues cysteine 553, histidine 689, and histidine 728 each act as for beta-ketoacyl synthase activity in the active site. Residues 908–1210 (LTFSGQSRTT…ANPSAHTFQA (303 aa)) are malonyl-CoA:ACP transacylase (MAT) domain. Serine 995 functions as the For acyl/malonyl transferase activity in the catalytic mechanism. An N-terminal hotdog fold region spans residues 1280–1406 (PKKVQQLVTL…GDFFATSGEM (127 aa)). The 302-residue stretch at 1280–1581 (PKKVQQLVTL…FMRIKAAKLE (302 aa)) folds into the PKS/mFAS DH domain. The segment at 1285 to 1580 (QLVTLKKTEG…QFMRIKAAKL (296 aa)) is product template (PT) domain. Histidine 1315 (proton acceptor; for dehydratase activity) is an active-site residue. The segment at 1428-1581 (DAERLRTATA…FMRIKAAKLE (154 aa)) is C-terminal hotdog fold. The Proton donor; for dehydratase activity role is filled by aspartate 1492. Residues 1587–1624 (ANPGSKTKSTNGNALPSVPRSVPAGPTSAPQQVAPTTM) are disordered. A compositionally biased stretch (polar residues) spans 1588-1600 (NPGSKTKSTNGNA). Residues 1640 to 1724 (PSKIADLKSL…PTAALTEGLV (85 aa)) enclose the Carrier domain. Serine 1674 carries the O-(pantetheine 4'-phosphoryl)serine modification. Residues 1734–1748 (SDSIRNSTGFHTTIP) show a composition bias toward polar residues. Residues 1734–1767 (SDSIRNSTGFHTTIPATPAELHSNPPDSLDGSTV) are disordered. Residues 1777–2107 (ARFKLDTMVY…YDFLLGELEN (331 aa)) are thioesterase (TE) domain. Active-site for thioesterase activity residues include serine 1897 and aspartate 2045.

It catalyses the reaction 3 malonyl-CoA + acetyl-CoA + 2 H(+) = orsellinate + 3 CO2 + 4 CoA. It functions in the pathway secondary metabolite biosynthesis; terpenoid biosynthesis. Its function is as follows. Non-reducing polyketide synthase; part of the asc-1 gene cluster that mediates the biosynthesis of both ascochlorin and ascofuranone, a strong inhibitor of cyanide-insensitive alternative oxidases and a promising drug candidate against African trypanosomiasis. The first step in the pathway is performed by the non-reducing polyketide synthase ascC that produces orsellinic acid by condensing acetyl-CoA with 3 malonyl-CoA units. Orsellinic acid is then prenylated by the prenyltransferase ascA to yield ilicicolinic acid B. Ilicicolinic acid B is further reduced to ilicicolin B by the reductase ascB. The halogenase ascD then chlorinates ilicicolin B to produce ilicicolin A which is converted to ilicicolin A epoxide by the cytochrome P450 monooxygenase ascE that catalyzes stereoselective epoxidation of the terminal double bond of the prenyl group. Ilicicolin A epoxide is the last common precursor for the biosynthesis of ascofuranone and ascochlorin. The terpene cyclase ascF produces a monocyclic terpene, and the cyclization reaction is proposed to be initiated by protonation of the terminal epoxide of ilicicolin A epoxide to generate a monocyclic tertiarycation, which is followed by a series of hydride and methyl shifts with abstraction of proton, leading to the formation of the (14S,15R,19R)-trimethylcyclohexanone ring structure of ilicicolin C, which is finally reduced to ascochlorin by the dehydrogenase ascG. On the other hand, ilicicolin A epoxide is hydroxylated by the cytochrome P450 monooxygenase ascH, and the resultant product is cyclized by the terpene cyclase ascI to ascofuranol via protonation-initiated epoxide ring opening, which facilitates the 6-endo-tet cyclization to form the tetrahy-drofuran ring. Finally, ascofuranol is oxidized into ascofuranone by ascJ. The sequence is that of Non-reducing polyketide synthase ascC from Acremonium egyptiacum (Oospora egyptiaca).